We begin with the raw amino-acid sequence, 911 residues long: Protein argonaute 4B (911 aa).

Disordered regions lie at residues 1–51 (MDAH…RPGL) and 149–171 (KTAA…KRVR). The 116-residue stretch at 281 to 396 (PVIDFLLANQ…FPIELCSLIP (116 aa)) folds into the PAZ domain. In terms of domain architecture, Piwi spans 565–872 (FLLCLLPERK…AAAQVGTFLK (308 aa)).

It belongs to the argonaute family. Ago subfamily.

Functionally, probably involved in the RNA silencing pathway. May bind to short RNAs such as microRNAs (miRNAs) or short interfering RNAs (siRNAs), and represses the translation of mRNAs which are complementary to them. In Oryza sativa subsp. japonica (Rice), this protein is Protein argonaute 4B (AGO4B).